Here is a 361-residue protein sequence, read N- to C-terminus: Protein TIFY 8 (361 aa).

Disordered regions lie at residues 53–78 (NKAA…GLSS), 113–134 (RFSG…HPET), 190–232 (QTAA…RKDL), and 268–361 (SGGS…KEAT). Low complexity predominate over residues 56–78 (AKAAMTPSTASASSAGGLGGLSS). 2 stretches are compositionally biased toward polar residues: residues 113–127 (RFSG…SHFT) and 208–232 (SSFT…RKDL). The region spanning 232-267 (LASSTKQMTIFYGGQAHVFDDVHPNKADVIMALAGS) is the Tify domain. The span at 333–361 (GREHQGSIISRGRDIRDPVHRSDPEKEAT) shows a compositional bias: basic and acidic residues.

The protein belongs to the TIFY/JAZ family. In terms of assembly, interacts with AFPH2/NINJA. Post-translationally, ubiquitinated. Targeted for degradation by the SCF(COI1) E3 ubiquitin ligase-proteasome pathway during jasmonate signaling.

Its subcellular location is the nucleus. Its function is as follows. Repressor of jasmonate responses. This is Protein TIFY 8 from Arabidopsis thaliana (Mouse-ear cress).